A 309-amino-acid polypeptide reads, in one-letter code: THAP domain-containing protein 7 (309 aa).

The THAP-type zinc-finger motif lies at 1–93; the sequence is MPRHCSAAGC…LKEGAVPTIF (93 aa). S162 bears the Phosphoserine mark. Residues 176–210 are disordered; sequence SDLLGPLGAQADEAGCSTQPSPEQHPSPLEPQPAS. A compositionally biased stretch (pro residues) spans 198–209; the sequence is EQHPSPLEPQPA. S210 is subject to Phosphoserine. Residues 229–232 carry the HCFC1-binding motif (HBM) motif; sequence EHSY.

As to quaternary structure, forms homodimers. Interacts with HDAC3 and nuclear hormone receptor corepressors. Interacts via HBM with HCFC1.

Its subcellular location is the nucleus. It localises to the chromosome. Its function is as follows. Chromatin-associated, histone tail-binding protein that represses transcription via recruitment of HDAC3 and nuclear hormone receptor corepressors. This chain is THAP domain-containing protein 7 (Thap7), found in Mus musculus (Mouse).